Reading from the N-terminus, the 257-residue chain is Deoxyribose-phosphate aldolase (257 aa).

Asp102 (proton donor/acceptor) is an active-site residue. Lys166 serves as the catalytic Schiff-base intermediate with acetaldehyde. Lys198 serves as the catalytic Proton donor/acceptor.

Belongs to the DeoC/FbaB aldolase family. DeoC type 2 subfamily.

The protein localises to the cytoplasm. The enzyme catalyses 2-deoxy-D-ribose 5-phosphate = D-glyceraldehyde 3-phosphate + acetaldehyde. Its pathway is carbohydrate degradation; 2-deoxy-D-ribose 1-phosphate degradation; D-glyceraldehyde 3-phosphate and acetaldehyde from 2-deoxy-alpha-D-ribose 1-phosphate: step 2/2. Catalyzes a reversible aldol reaction between acetaldehyde and D-glyceraldehyde 3-phosphate to generate 2-deoxy-D-ribose 5-phosphate. The chain is Deoxyribose-phosphate aldolase from Shewanella frigidimarina (strain NCIMB 400).